A 289-amino-acid polypeptide reads, in one-letter code: 4-hydroxybenzoate octaprenyltransferase (289 aa).

8 helical membrane-spanning segments follow: residues 23–43 (IGAL…TPGV), 46–66 (LWIL…GCVV), 99–119 (LFVV…TMTI), 141–161 (LPQV…FAAV), 163–183 (ESVP…AVAY), 213–233 (LIIG…GWLN), 234–254 (GLGW…VYQQ), and 268–288 (AFMN…MSYV).

It belongs to the UbiA prenyltransferase family. Requires Mg(2+) as cofactor.

It localises to the cell inner membrane. The enzyme catalyses all-trans-octaprenyl diphosphate + 4-hydroxybenzoate = 4-hydroxy-3-(all-trans-octaprenyl)benzoate + diphosphate. It functions in the pathway cofactor biosynthesis; ubiquinone biosynthesis. Catalyzes the prenylation of para-hydroxybenzoate (PHB) with an all-trans polyprenyl group. Mediates the second step in the final reaction sequence of ubiquinone-8 (UQ-8) biosynthesis, which is the condensation of the polyisoprenoid side chain with PHB, generating the first membrane-bound Q intermediate 3-octaprenyl-4-hydroxybenzoate. This chain is 4-hydroxybenzoate octaprenyltransferase, found in Citrobacter koseri (strain ATCC BAA-895 / CDC 4225-83 / SGSC4696).